A 368-amino-acid chain; its full sequence is S-adenosylmethionine decarboxylase proenzyme 1 (368 aa).

Catalysis depends on residues glutamate 9 and arginine 12. The active-site Schiff-base intermediate with substrate; via pyruvic acid is the serine 69. Pyruvic acid (Ser); by autocatalysis is present on serine 69. Cysteine 83 serves as the catalytic Proton donor; for catalytic activity. Catalysis depends on proton acceptor; for processing activity residues serine 234 and histidine 247.

Belongs to the eukaryotic AdoMetDC family. Pyruvate serves as cofactor. Post-translationally, is synthesized initially as an inactive proenzyme. Formation of the active enzyme involves a self-maturation process in which the active site pyruvoyl group is generated from an internal serine residue via an autocatalytic post-translational modification. Two non-identical subunits are generated from the proenzyme in this reaction, and the pyruvate is formed at the N-terminus of the alpha chain, which is derived from the carboxyl end of the proenzyme. The post-translation cleavage follows an unusual pathway, termed non-hydrolytic serinolysis, in which the side chain hydroxyl group of the serine supplies its oxygen atom to form the C-terminus of the beta chain, while the remainder of the serine residue undergoes an oxidative deamination to produce ammonia and the pyruvoyl group blocking the N-terminus of the alpha chain.

The catalysed reaction is S-adenosyl-L-methionine + H(+) = S-adenosyl 3-(methylsulfanyl)propylamine + CO2. It functions in the pathway amine and polyamine biosynthesis; S-adenosylmethioninamine biosynthesis; S-adenosylmethioninamine from S-adenosyl-L-methionine: step 1/1. This is S-adenosylmethionine decarboxylase proenzyme 1 (SAMDC1) from Brassica juncea (Indian mustard).